Reading from the N-terminus, the 394-residue chain is Queuine tRNA-ribosyltransferase (394 aa).

Asp95 (proton acceptor) is an active-site residue. Residues 95–99 (DSGGF), Asp149, Gln190, and Gly217 each bind substrate. Residues 248-254 (GVGTPID) form an RNA binding region. The active-site Nucleophile is the Asp267. The segment at 272–276 (TRNAR) is RNA binding; important for wobble base 34 recognition. Zn(2+) is bound by residues Cys305, Cys307, Cys310, and His337. The tract at residues 375–394 (NDANETVGATESTESTESTE) is disordered.

This sequence belongs to the queuine tRNA-ribosyltransferase family. Homodimer. Within each dimer, one monomer is responsible for RNA recognition and catalysis, while the other monomer binds to the replacement base PreQ1. Zn(2+) serves as cofactor.

It catalyses the reaction 7-aminomethyl-7-carbaguanine + guanosine(34) in tRNA = 7-aminomethyl-7-carbaguanosine(34) in tRNA + guanine. It participates in tRNA modification; tRNA-queuosine biosynthesis. Functionally, catalyzes the base-exchange of a guanine (G) residue with the queuine precursor 7-aminomethyl-7-deazaguanine (PreQ1) at position 34 (anticodon wobble position) in tRNAs with GU(N) anticodons (tRNA-Asp, -Asn, -His and -Tyr). Catalysis occurs through a double-displacement mechanism. The nucleophile active site attacks the C1' of nucleotide 34 to detach the guanine base from the RNA, forming a covalent enzyme-RNA intermediate. The proton acceptor active site deprotonates the incoming PreQ1, allowing a nucleophilic attack on the C1' of the ribose to form the product. After dissociation, two additional enzymatic reactions on the tRNA convert PreQ1 to queuine (Q), resulting in the hypermodified nucleoside queuosine (7-(((4,5-cis-dihydroxy-2-cyclopenten-1-yl)amino)methyl)-7-deazaguanosine). This Sorangium cellulosum (strain So ce56) (Polyangium cellulosum (strain So ce56)) protein is Queuine tRNA-ribosyltransferase.